We begin with the raw amino-acid sequence, 1242 residues long: DNA-directed RNA polymerase RPB2 homolog (1242 aa).

The C4-type zinc-finger motif lies at 1180–1201 (CRNCGEPAIYNASHPIYKCMNC).

Belongs to the RNA polymerase beta chain family. Part of the viral DNA-directed RNA polymerase that consists of 8 polII-like subunits (RPB1, RPB2, RPB3, RPB5, RPB6, RPB7, RPB9, RPB10), a capping enzyme and a termination factor.

The protein resides in the host cytoplasm. It localises to the virion. It carries out the reaction RNA(n) + a ribonucleoside 5'-triphosphate = RNA(n+1) + diphosphate. Functionally, catalytic component of the DNA-directed RNA polymerase (RNAP) that catalyzes the transcription in the cytoplasm of viral DNA into RNA using the four ribonucleoside triphosphates as substrates. Forms the polymerase active center together with RPB1. Part of the core element with the central large cleft, the clamp element that moves to open and close the cleft and the jaws that are thought to grab the incoming DNA template. The polypeptide is DNA-directed RNA polymerase RPB2 homolog (African swine fever virus (isolate Pig/Kenya/KEN-50/1950) (ASFV)).